Here is a 212-residue protein sequence, read N- to C-terminus: MDSHMNNLLKWSIENSVPAQPDDPEQVKQERSLDRLDTQALQRLLSNAPSDADLMKAAMEVVSDDFATLENKLIAFDNFEQLIENLDNANNMGVLGLWTPLVEALSDAEPQMRKMAAWCIGTAVQNNEMAQNKLLDFKAVPKLLSLAKTDPDTTVRRKAIYALSSAVRNHQPSLDELQKLLPADYVSEGEKMNAADMDRIDAIMNKLKEIPA.

ARM repeat units follow at residues 26–67 (QVKQ…DDFA), 86–125 (LDNANNMGVLGLWTPLVEALSDAEPQMRKMAAWCIGTAVQ), and 128–168 (EMAQ…SAVR).

Belongs to the FES1 family.

Its subcellular location is the cytoplasm. Its function is as follows. Functions as a nucleotide exchange factor (NEF) for Hsp70 chaperones which accelerates the release of ADP. Required for fully efficient Hsp70-mediated folding of proteins. This chain is Hsp70 nucleotide exchange factor FES1 (FES1), found in Coccidioides immitis (strain RS) (Valley fever fungus).